A 277-amino-acid chain; its full sequence is Ribosomal RNA small subunit methyltransferase I (277 aa).

This sequence belongs to the methyltransferase superfamily. RsmI family.

It localises to the cytoplasm. It catalyses the reaction cytidine(1402) in 16S rRNA + S-adenosyl-L-methionine = 2'-O-methylcytidine(1402) in 16S rRNA + S-adenosyl-L-homocysteine + H(+). Functionally, catalyzes the 2'-O-methylation of the ribose of cytidine 1402 (C1402) in 16S rRNA. This chain is Ribosomal RNA small subunit methyltransferase I, found in Mycoplasma genitalium (strain ATCC 33530 / DSM 19775 / NCTC 10195 / G37) (Mycoplasmoides genitalium).